We begin with the raw amino-acid sequence, 976 residues long: Leucine--tRNA ligase (976 aa).

Over residues 1-23 (MTESPTTTPGSTSGAPSGVPSGV) the composition is skewed to low complexity. A disordered region spans residues 1 to 34 (MTESPTTTPGSTSGAPSGVPSGVNDAESDAPRHR). A 'HIGH' region motif is present at residues 86-97 (PYPSGEGLHVGH). The short motif at 745–749 (KIGKS) is the 'KMSKS' region element. K748 provides a ligand contact to ATP.

This sequence belongs to the class-I aminoacyl-tRNA synthetase family.

It localises to the cytoplasm. The enzyme catalyses tRNA(Leu) + L-leucine + ATP = L-leucyl-tRNA(Leu) + AMP + diphosphate. The chain is Leucine--tRNA ligase from Mycobacterium marinum (strain ATCC BAA-535 / M).